A 578-amino-acid chain; its full sequence is Cytochrome P450 monooxygenase fsoE (578 aa).

Residues 28-48 (LLMAVAITYAISWINWFFTSW) form a helical membrane-spanning segment. Cys-517 provides a ligand contact to heme.

Belongs to the cytochrome P450 family. Heme serves as cofactor.

The protein localises to the membrane. The catalysed reaction is 3-O-(beta-D-glucopyranosyl)-isomotiol + 2 reduced [NADPH--hemoprotein reductase] + 2 O2 = 2-deacetoxyfuscoatroside + 2 oxidized [NADPH--hemoprotein reductase] + 2 H2O + 3 H(+). The enzyme catalyses 3-O-(beta-D-glucopyranosyl)-2alpha-hydroxyisomotiol + 2 reduced [NADPH--hemoprotein reductase] + 2 O2 = 2-deacetylfuscoatroside + 2 oxidized [NADPH--hemoprotein reductase] + 2 H2O + 3 H(+). It catalyses the reaction 3-O-(beta-D-glucopyranosyl)-2alpha-acetoxyisomotiol + 2 reduced [NADPH--hemoprotein reductase] + 2 O2 = fuscoatroside + 2 oxidized [NADPH--hemoprotein reductase] + 2 H2O + 3 H(+). It carries out the reaction isomotiol + reduced [NADPH--hemoprotein reductase] + O2 = 19beta-hydroxyisomotiol + oxidized [NADPH--hemoprotein reductase] + H2O + H(+). The catalysed reaction is 2alpha-hydroxyisomotiol + reduced [NADPH--hemoprotein reductase] + O2 = 2alpha,19beta-dihydroxyisomotiol + oxidized [NADPH--hemoprotein reductase] + H2O + H(+). The enzyme catalyses 2alpha,19beta-dihydroxyisomotiol + reduced [NADPH--hemoprotein reductase] + O2 = 2alpha-hydroxyismotiol-19-one + oxidized [NADPH--hemoprotein reductase] + 2 H2O + H(+). It catalyses the reaction 2alpha-hydroxyismotiol-19-one + 2 reduced [NADPH--hemoprotein reductase] + O2 = 2-deacetyl,3-deglucopyranosyl-fuscoatroside + 2 oxidized [NADPH--hemoprotein reductase] + H2O + 3 H(+). It participates in secondary metabolite biosynthesis; terpenoid biosynthesis. Functionally, cytochrome P450 monooxygenase; part of the gene cluster that mediates the biosynthesis of the enfumafungin-type antibiotic, fuscoatroside. Within the pathway, fsoE catalyzes the oxidative cleavage of the c19-C20 bond within the E-ring, resulting in the formation of a carboxyl group and a methyl group. FsoE exhibits preferential substrate selectivity toward glycoside substrates over their aglycones. The fuscoatroside biosynthesis is initiated by the cyclization of 2,3(S)-oxidosqualene through FsoA's terpene cyclase (TC) domain, leading to the formation of the fernane skeleton isomotiol, harboring a fernane triterpene skeleton with a C8-C9 double bond. Subsequently, C2-alpha-hydroxylation mediated by fsoD results in the production of 2-alpha-hydroxy-isomotiol, which is further acetylated by fsoF. The glycosyltransferase (GT) domain of FsoA may convert isomotiol, 2-alpha-hydroxy-isomotiol, and the acetylated derivative of 2-alpha-hydroxy-isomotiol into their corresponding glycosides 3-O-(beta-D-glucopyranosyl)-isomotiol, 3-O-(beta-D-glucopyranosyl)-2-alpha-hydroxy-isomotiol, and 3-O-(beta-D-glucopyranosyl)-2-alpha-acetoxy-isomotiol, which then undergo oxidative cleavage under the action of fsoE to form s 2-deacetoxy-fuscoatroside, 2-deacetyl-fuscoatroside, and fuscoatroside, respectively. Although hydroxylation followed by acetylation of 3-O-(beta-D-glucopyranosyl)-isomotiol and 2-deacetoxy-fuscoatroside by fsoD and fsoF could not be ruled out, this process is likely to occur with difficulty due to bulky steric hindrance caused by the presence of a glycan at C3 in these compounds. Interestingly, fsoE can also utilize the aglycones isomotiol and 2-alpha-hydroxy-isomotiol as substrates to generate 19-beta-hydroxy-isomotiol and 2-alpha,19-beta-dihydroxy-isomotiol, respectively. These reactions occur with lower efficiency. Finally, fsoE can further convert 2-alpha,19-beta-dihydroxy-isomotiol into 2-alpha-hydroxy-ismotiol-19-one and 2-alpha-hydroxy-ismotiol-19-one into 2-deacetyl-3-deglucopyranosyl-fuscoatroside. The protein is Cytochrome P450 monooxygenase fsoE of Humicola fuscoatra.